The chain runs to 500 residues: Guanosine-5'-triphosphate,3'-diphosphate pyrophosphatase (500 aa).

This sequence belongs to the GppA/Ppx family. GppA subfamily.

The enzyme catalyses guanosine 3'-diphosphate 5'-triphosphate + H2O = guanosine 3',5'-bis(diphosphate) + phosphate + H(+). Its pathway is purine metabolism; ppGpp biosynthesis; ppGpp from GTP: step 2/2. In terms of biological role, catalyzes the conversion of pppGpp to ppGpp. Guanosine pentaphosphate (pppGpp) is a cytoplasmic signaling molecule which together with ppGpp controls the 'stringent response', an adaptive process that allows bacteria to respond to amino acid starvation, resulting in the coordinated regulation of numerous cellular activities. The chain is Guanosine-5'-triphosphate,3'-diphosphate pyrophosphatase from Photorhabdus laumondii subsp. laumondii (strain DSM 15139 / CIP 105565 / TT01) (Photorhabdus luminescens subsp. laumondii).